A 73-amino-acid polypeptide reads, in one-letter code: UPF0352 protein APJL_0577 (73 aa).

This sequence belongs to the UPF0352 family.

This Actinobacillus pleuropneumoniae serotype 3 (strain JL03) protein is UPF0352 protein APJL_0577.